A 580-amino-acid chain; its full sequence is Cis-3-hydroxy-L-proline dehydratase (580 aa).

The active-site Proton acceptor is the serine 66.

This sequence belongs to the AcnX family. In terms of assembly, monomer. It depends on Fe(3+) as a cofactor.

The catalysed reaction is cis-3-hydroxy-L-proline = 1-pyrroline-2-carboxylate + H2O. Its activity is regulated as follows. Inhibited by Zn(2+), Cd(2+) and Hg(2+), but not by Co(2+), Ni(2+), Mn(2+), Sr(2+), Mg(2+), or Fe(3+). Inhibited by pyrrole-2-carboxylate and its derivative 2-thiophenecarboxylate, but not by trans-aconitate, fluorocitrate and oxalomalate, which are typical inhibitors of the aconitase enzymes. Catalyzes the dehydration of cis-3-hydroxy-L-proline (c3LHyp) to Delta(1)-pyrroline-2-carboxylate (Pyr2C). Also has activity with (2S,3S,4R)-3,4-dihydroxyproline as substrate, albeit at about 300-fold lower rate. No activity with L-proline, trans-4-hydroxy-L-proline (t4LHyp), cis-4-hydroxy-L-proline (c4LHyp), trans-3-hydroxy-L-proline (t3LHyp), D-proline, cis-4-hydroxy-D-proline (c4DHyp), trans-4-hydroxy-D-proline (t4DHyp) or L-serine as substrates. No hydro-lyase activity with citrate or cis-acotinate. Does not catalyze 2-epimerization of c3LHyp to trans-3-hydroxy-D-proline (t3DHyp). Involved in a degradation pathway that converts c3LHyp to L-proline, which would allow P.aeruginosa to grow on c3LHyp as a sole carbon source. The sequence is that of Cis-3-hydroxy-L-proline dehydratase from Pseudomonas aeruginosa (strain ATCC 15692 / DSM 22644 / CIP 104116 / JCM 14847 / LMG 12228 / 1C / PRS 101 / PAO1).